The following is a 157-amino-acid chain: MAKKDNGPLVAATNRKAYHNYHILDTYEAGIELLGSEVKSIRKKEVSLDGAFVRIEGMQAYVFNMHINPYKYNTVTEVEPLRQRRLLLNKKEINKLKGHAEIKGHTIIPLEVYFKNGWAKIKVGLGKGKQLFDKRDAIKKRDLSREMEKDFKNKIKF.

This sequence belongs to the SmpB family.

It localises to the cytoplasm. In terms of biological role, required for rescue of stalled ribosomes mediated by trans-translation. Binds to transfer-messenger RNA (tmRNA), required for stable association of tmRNA with ribosomes. tmRNA and SmpB together mimic tRNA shape, replacing the anticodon stem-loop with SmpB. tmRNA is encoded by the ssrA gene; the 2 termini fold to resemble tRNA(Ala) and it encodes a 'tag peptide', a short internal open reading frame. During trans-translation Ala-aminoacylated tmRNA acts like a tRNA, entering the A-site of stalled ribosomes, displacing the stalled mRNA. The ribosome then switches to translate the ORF on the tmRNA; the nascent peptide is terminated with the 'tag peptide' encoded by the tmRNA and targeted for degradation. The ribosome is freed to recommence translation, which seems to be the essential function of trans-translation. The polypeptide is SsrA-binding protein (Elusimicrobium minutum (strain Pei191)).